The sequence spans 309 residues: Diacylglycerol kinase (309 aa).

The region spanning 9 to 140 is the DAGKc domain; sequence HEIGKVTALT…IDLGRIQDDN (132 aa). ATP contacts are provided by residues 19-23, 76-82, and threonine 101; these read NPLSG and GDGVVSN. Mg(2+) is bound by residues aspartate 226, aspartate 229, and leucine 231. The Proton acceptor role is filled by aspartate 285.

This sequence belongs to the diacylglycerol/lipid kinase family. It depends on Mg(2+) as a cofactor.

It is found in the secreted. Its subcellular location is the cell wall. The enzyme catalyses a 1,2-diacyl-sn-glycerol + ATP = a 1,2-diacyl-sn-glycero-3-phosphate + ADP + H(+). The catalysed reaction is N-hexadecanoylsphing-4-enine + ATP = N-(hexadecanoyl)-sphing-4-enine-1-phosphate + ADP + H(+). Functionally, catalyzes the phosphorylation of diacylglycerol (DAG) into phosphatidic acid. Is involved in the biosynthesis of phosphatidylinositol mannosides (PIMs), probably via a role in the biosynthesis of phosphatidylinositol (PI), a PIM precursor, which is derived from phosphatidic acid. Is also able to phosphorylate other various amphipathic lipids of host and bacterial origin in vitro, such as ceramide. The polypeptide is Diacylglycerol kinase (dagK) (Mycobacterium tuberculosis (strain CDC 1551 / Oshkosh)).